Consider the following 195-residue polypeptide: Replication restart protein PriC (195 aa).

It belongs to the PriC family. As to quaternary structure, monomer. Component of the replication restart primosome, which is composed of PriA, PriB, PriC, DnaB and DnaT; DnaG primase associates transiently with this complex. Interacts with the C-terminus of SSB; this interaction is required to load the main replicative helicase onto substrate replication forks. Interacts with helicase DnaB alone and in the DnaB-DnaC complex, probably 1:1 binding with DnaB.

Functionally, involved in the restart of stalled replication forks, which reloads the DnaB replicative helicase on sites other than the origin of replication. Recognizes abandoned replication forks and remodels DNA single-stranded binding protein (SSB) on ssDNA to uncover a loading site for DnaB. There are several restart pathways, the PriA-PriC pathway is a minor restart pathway. Part of the minor PriC-Rep pathway for restart of stalled replication forks, which has a different substrate specificity than PriA. Part of the major restart pathway with PriA, PriB, DnaB, DnaT and DnaG primase. priB and priC have redundant roles in the cell. This is Replication restart protein PriC from Haemophilus influenzae (strain ATCC 51907 / DSM 11121 / KW20 / Rd).